A 145-amino-acid chain; its full sequence is Deoxyuridine 5'-triphosphate nucleotidohydrolase (145 aa).

Residues 62 to 64 (RSG), Asn-75, 79 to 81 (TVD), and Lys-89 contribute to the substrate site.

Belongs to the dUTPase family. It depends on Mg(2+) as a cofactor.

The enzyme catalyses dUTP + H2O = dUMP + diphosphate + H(+). It participates in pyrimidine metabolism; dUMP biosynthesis; dUMP from dCTP (dUTP route): step 2/2. Its function is as follows. This enzyme is involved in nucleotide metabolism: it produces dUMP, the immediate precursor of thymidine nucleotides and it decreases the intracellular concentration of dUTP so that uracil cannot be incorporated into DNA. This chain is Deoxyuridine 5'-triphosphate nucleotidohydrolase, found in Helicobacter pylori (strain Shi470).